Consider the following 262-residue polypeptide: Serine/arginine-rich SC35-like splicing factor SCL30A (262 aa).

2 disordered regions span residues 1 to 38 and 115 to 262; these read MRGR…LPTS and ENRK…SPSQ. Residues Ser-9 and Ser-20 each carry the phosphoserine modification. Positions 37-115 constitute an RRM domain; the sequence is TSLLVRNLRH…RELTVVFAEE (79 aa). Residues 115–140 are compositionally biased toward basic and acidic residues; that stretch reads ENRKKPTEMRTRDRGGRSNRFQDRRR. The span at 150-161 shows a compositional bias: basic residues; the sequence is PPRRGRRSRSRS. Phosphoserine is present on residues Ser-166, Ser-174, Ser-176, and Ser-178. A compositionally biased stretch (basic and acidic residues) spans 180 to 190; it reads QDRRYEKERSY. Phosphoserine occurs at positions 191 and 193. Over residues 209-226 the composition is skewed to basic residues; it reads VKSHSRSPRRSVSPRKNR. Over residues 234–246 the composition is skewed to low complexity; that stretch reads RSQSPVPRQSRSP. Phosphoserine is present on residues Ser-235, Ser-259, and Ser-261.

Belongs to the splicing factor SR family. SCL subfamily. In terms of assembly, component of the spliceosome. Interacts with SNRNP35, CYP59 and RS2Z33.

The protein localises to the nucleus speckle. Functionally, involved in intron recognition and spliceosome assembly. Binds probably to multiple 5'-GAAG-3' repeats found in its third intron, suggesting autoregulation of alternative splicing. May be necessary for accurate splicing of the 3' region of introns. This Arabidopsis thaliana (Mouse-ear cress) protein is Serine/arginine-rich SC35-like splicing factor SCL30A (SCL30A).